Consider the following 334-residue polypeptide: 3-dehydroquinate synthase (334 aa).

Belongs to the archaeal-type DHQ synthase family.

The catalysed reaction is 2-amino-2,3,7-trideoxy-D-lyxo-hept-6-ulosonate + NAD(+) + H2O = 3-dehydroquinate + NH4(+) + NADH + H(+). In terms of biological role, catalyzes the oxidative deamination and cyclization of 2-amino-3,7-dideoxy-D-threo-hept-6-ulosonic acid (ADH) to yield 3-dehydroquinate (DHQ), which is fed into the canonical shikimic pathway of aromatic amino acid biosynthesis. This chain is 3-dehydroquinate synthase, found in Korarchaeum cryptofilum (strain OPF8).